Reading from the N-terminus, the 406-residue chain is Dual-specificity RNA methyltransferase RlmN (406 aa).

Residue Glu119 is the Proton acceptor of the active site. The Radical SAM core domain occupies Asp125–Asp370. Cys132 and Cys375 are oxidised to a cystine. [4Fe-4S] cluster-binding residues include Cys139, Cys143, and Cys146. S-adenosyl-L-methionine-binding positions include Gly192–Glu193, Ser224, Ser246–His248, and Asn332. Cys375 acts as the S-methylcysteine intermediate in catalysis.

The protein belongs to the radical SAM superfamily. RlmN family. [4Fe-4S] cluster is required as a cofactor.

It localises to the cytoplasm. The enzyme catalyses adenosine(2503) in 23S rRNA + 2 reduced [2Fe-2S]-[ferredoxin] + 2 S-adenosyl-L-methionine = 2-methyladenosine(2503) in 23S rRNA + 5'-deoxyadenosine + L-methionine + 2 oxidized [2Fe-2S]-[ferredoxin] + S-adenosyl-L-homocysteine. The catalysed reaction is adenosine(37) in tRNA + 2 reduced [2Fe-2S]-[ferredoxin] + 2 S-adenosyl-L-methionine = 2-methyladenosine(37) in tRNA + 5'-deoxyadenosine + L-methionine + 2 oxidized [2Fe-2S]-[ferredoxin] + S-adenosyl-L-homocysteine. Its function is as follows. Specifically methylates position 2 of adenine 2503 in 23S rRNA and position 2 of adenine 37 in tRNAs. m2A2503 modification seems to play a crucial role in the proofreading step occurring at the peptidyl transferase center and thus would serve to optimize ribosomal fidelity. The chain is Dual-specificity RNA methyltransferase RlmN from Xylella fastidiosa (strain M12).